We begin with the raw amino-acid sequence, 445 residues long: Putative ATP-dependent RNA helicase L538 (445 aa).

Residues 14-151 (IEFMKNNRGV…AVLVNIVRGE (138 aa)) form the Helicase ATP-binding domain. An ATP-binding site is contributed by 27–34 (HSTGAGKT). Residues 101-104 (DEAH) carry the DEAH box motif. Residues 273–442 (KIEDIMKYII…VIDASIENNY (170 aa)) enclose the Helicase C-terminal domain.

It belongs to the DEAD box helicase family. DEAH subfamily.

Its subcellular location is the virion. The catalysed reaction is ATP + H2O = ADP + phosphate + H(+). The protein is Putative ATP-dependent RNA helicase L538 of Acanthamoeba polyphaga mimivirus (APMV).